We begin with the raw amino-acid sequence, 177 residues long: Peptidoglycan-associated lipoprotein (177 aa).

The first 32 residues, 1–32 (MSRTNISALSPMQKLARNPAVIAMTLALALAG), serve as a signal peptide directing secretion. Residue cysteine 33 is the site of N-palmitoyl cysteine attachment. Residue cysteine 33 is the site of S-diacylglycerol cysteine attachment. One can recognise an OmpA-like domain in the interval 59 to 176 (QQDFTVNVGD…RAVTVLGGAG (118 aa)).

It belongs to the Pal lipoprotein family. As to quaternary structure, the Tol-Pal system is composed of five core proteins: the inner membrane proteins TolA, TolQ and TolR, the periplasmic protein TolB and the outer membrane protein Pal. They form a network linking the inner and outer membranes and the peptidoglycan layer.

It localises to the cell outer membrane. Its function is as follows. Part of the Tol-Pal system, which plays a role in outer membrane invagination during cell division and is important for maintaining outer membrane integrity. The sequence is that of Peptidoglycan-associated lipoprotein from Agrobacterium fabrum (strain C58 / ATCC 33970) (Agrobacterium tumefaciens (strain C58)).